Here is a 280-residue protein sequence, read N- to C-terminus: MTQPSGLKNLLRAAAGALPVVPRTDQLPNRTVTVEELPIDPANVAAYAAVTGLRYGNQVPLTYPFALTFPSVMSLVTGFDFPFAAMGAIHTENHITQYRPIAVTDAVGVRVRAENLREHRRGLLVDLVTNVSVGNDVAWHQVTTFLHQQRTSLSGEPKPPPQKKPKLPPPAAVLRITPAKIRRYAAVGGDHNPIHTNPIAAKLFGFPTVIAHGMFTAAAVLANIEARFPDAVRYSVRFAKPVLLPATAGLYVAEGDGGWDLTLRNMAKGYPHLTATVRGL.

Residues 149 to 170 (QRTSLSGEPKPPPQKKPKLPPP) form a disordered region. Positions 162 to 256 (QKKPKLPPPA…TAGLYVAEGD (95 aa)) constitute a MaoC-like domain.

Belongs to the enoyl-CoA hydratase/isomerase family.

It carries out the reaction a (3R)-3-hydroxyacyl-CoA = a (2E)-enoyl-CoA + H2O. The catalysed reaction is (2E)-octenoyl-CoA + H2O = (3R)-hydroxyoctanoyl-CoA. It catalyses the reaction (3R)-3-hydroxydodecanoyl-CoA = (2E)-dodecenoyl-CoA + H2O. The enzyme catalyses (3R)-hydroxyhexadecanoyl-CoA = (2E)-hexadecenoyl-CoA + H2O. It carries out the reaction (3R)-hydroxyeicosanoyl-CoA = (2E)-eicosenoyl-CoA + H2O. The catalysed reaction is (3R)-3-hydroxybutanoyl-CoA = (2E)-butenoyl-CoA + H2O. In terms of biological role, shows trans-enoyl-CoA hydratase/3-hydroxyacyl-CoA dehydratase activity. Displays a broad chain length specificity, with a predilection for the C8 to C12 substrates. This is 3-hydroxyacyl-thioester dehydratase X from Mycobacterium tuberculosis (strain ATCC 25618 / H37Rv).